The chain runs to 115 residues: Probable non-functional T cell receptor beta variable 7-3 (115 aa).

The signal sequence occupies residues 1-21 (MGTRLLCWAALCLLGADHTGA). One can recognise an Ig-like domain in the interval 22–115 (GVSQTPSNKV…SAAYLRASSL (94 aa)).

Most probably, the alpha-beta TR is not assembled due to incorrect folding of the beta chain. Alpha-beta TR is a heterodimer composed of an alpha and beta chain; disulfide-linked. The alpha-beta TR is associated with the transmembrane signaling CD3 coreceptor proteins to form the TR-CD3 (TcR or TCR). The assembly of alpha-beta TR heterodimers with CD3 occurs in the endoplasmic reticulum where a single alpha-beta TR heterodimer associates with one CD3D-CD3E heterodimer, one CD3G-CD3E heterodimer and one CD247 homodimer forming a stable octameric structure. CD3D-CD3E and CD3G-CD3E heterodimers preferentially associate with TR alpha and TR beta chains, respectively. The association of the CD247 homodimer is the last step of TcR assembly in the endoplasmic reticulum and is required for transport to the cell surface.

Its subcellular location is the cell membrane. Probable non-functional open reading frame (ORF) of V region of the variable domain of T cell receptor (TR) beta chain. Non-functional ORF generally cannot participate in the synthesis of a productive T cell receptor (TR) chain due to altered V-(D)-J or switch recombination and/or splicing site (at mRNA level) and/or conserved amino acid change (protein level). Alpha-beta T cell receptors are antigen specific receptors which are essential to the immune response and are present on the cell surface of T lymphocytes. Recognize peptide-major histocompatibility (MH) (pMH) complexes that are displayed by antigen presenting cells (APC), a prerequisite for efficient T cell adaptive immunity against pathogens. Binding of alpha-beta TR to pMH complex initiates TR-CD3 clustering on the cell surface and intracellular activation of LCK that phosphorylates the ITAM motifs of CD3G, CD3D, CD3E and CD247 enabling the recruitment of ZAP70. In turn ZAP70 phosphorylates LAT, which recruits numerous signaling molecules to form the LAT signalosome. The LAT signalosome propagates signal branching to three major signaling pathways, the calcium, the mitogen-activated protein kinase (MAPK) kinase and the nuclear factor NF-kappa-B (NF-kB) pathways, leading to the mobilization of transcription factors that are critical for gene expression and essential for T cell growth and differentiation. The T cell repertoire is generated in the thymus, by V-(D)-J rearrangement. This repertoire is then shaped by intrathymic selection events to generate a peripheral T cell pool of self-MH restricted, non-autoaggressive T cells. Post-thymic interaction of alpha-beta TR with the pMH complexes shapes TR structural and functional avidity. This chain is Probable non-functional T cell receptor beta variable 7-3, found in Homo sapiens (Human).